We begin with the raw amino-acid sequence, 326 residues long: tRNA-modifying protein YgfZ (326 aa).

Positions 27 and 189 each coordinate folate.

The protein belongs to the tRNA-modifying YgfZ family.

It is found in the cytoplasm. Functionally, folate-binding protein involved in regulating the level of ATP-DnaA and in the modification of some tRNAs. It is probably a key factor in regulatory networks that act via tRNA modification, such as initiation of chromosomal replication. In Shigella dysenteriae serotype 1 (strain Sd197), this protein is tRNA-modifying protein YgfZ.